Here is a 528-residue protein sequence, read N- to C-terminus: MFRQSKRRIASRKNFSSYDDIVKSELDVGNTNAANQIILSSSSSEEEKKLYARLYESKLSFYDLPPQGEITLEQFEIWAIDRLKILLEIESCLSRNKSIKEIETIIKPQFQKLLPFNTESLEDRKKDYYSHFILRLCFCRSKELREKFVRAETFLFKIRFNMLTSTDQTKFVQSLDLPLLQFISNEEKAELSHQLYQTVSASLQFQLNLNEEHQRKQYFQQEKFIKLPFENVIELVGNRLVFLKDGYAYLPQFQQLNLLSNEFASKLNQELIKTYQYLPRLNEDDRLLPILNHLSSGYTIADFNQQKANQFSENVDDEINAQSVWSEEISSNYPLCIKNLMEGLKKNHHLRYYGRQQLSLFLKGIGLSADEALKFWSEAFTRNGNMTMEKFNKEYRYSFRHNYGLEGNRINYKPWDCHTILSKPRPGRGDYHGCPFRDWSHERLSAELRSMKLTQAQIISVLDSCQKGEYTIACTKVFEMTHNSASADLEIGEQTHIAHPNLYFERSRQLQKKQQKLEKEKLFNNGNH.

The interval 210–239 (NEEHQRKQYFQQEKFIKLPFENVIELVGNR) is H-T-H-like motif. [4Fe-4S] cluster-binding residues include C336, C417, C434, and C474.

Belongs to the eukaryotic-type primase large subunit family. As to quaternary structure, DNA polymerase alpha:primase is a four subunit enzyme complex, which is assembled throughout the cell cycle, and consists of the two DNA polymerase subunits A POL1 and B POL12, and the DNA primase large PRI2 and small PRI1 subunits. Interacts with MCM10. Requires [4Fe-4S] cluster as cofactor.

Its function is as follows. DNA primase is the polymerase that synthesizes small RNA primers for the Okazaki fragments made during discontinuous DNA replication. In a complex with DNA polymerase alpha (DNA polymerase alpha:primase) constitutes a replicative polymerase. Both primase components participate in formation of the active center, but the ATP-binding site is exclusively located on p48. In Saccharomyces cerevisiae (strain ATCC 204508 / S288c) (Baker's yeast), this protein is DNA primase large subunit (PRI2).